A 261-amino-acid chain; its full sequence is GTP cyclohydrolase FolE2 (261 aa).

Belongs to the GTP cyclohydrolase IV family.

The enzyme catalyses GTP + H2O = 7,8-dihydroneopterin 3'-triphosphate + formate + H(+). Its pathway is cofactor biosynthesis; 7,8-dihydroneopterin triphosphate biosynthesis; 7,8-dihydroneopterin triphosphate from GTP: step 1/1. Its function is as follows. Converts GTP to 7,8-dihydroneopterin triphosphate. This is GTP cyclohydrolase FolE2 from Geobacter metallireducens (strain ATCC 53774 / DSM 7210 / GS-15).